A 506-amino-acid polypeptide reads, in one-letter code: Lysine--tRNA ligase (506 aa).

Glu-415 and Glu-422 together coordinate Mg(2+).

It belongs to the class-II aminoacyl-tRNA synthetase family. As to quaternary structure, homodimer. It depends on Mg(2+) as a cofactor.

The protein resides in the cytoplasm. It carries out the reaction tRNA(Lys) + L-lysine + ATP = L-lysyl-tRNA(Lys) + AMP + diphosphate. The polypeptide is Lysine--tRNA ligase (lysS) (Buchnera aphidicola subsp. Acyrthosiphon pisum (strain APS) (Acyrthosiphon pisum symbiotic bacterium)).